The following is a 354-amino-acid chain: Glycine betaine/proline betaine transport system permease protein ProW (354 aa).

The tract at residues 1 to 28 (MADQTNPWDTAQVADTTTQTADAWGTPA) is disordered. Residues 1–99 (MADQTNPWDT…VDYILNGFQQ (99 aa)) lie on the Cytoplasmic side of the membrane. Residues 9–23 (DTAQVADTTTQTADA) are compositionally biased toward low complexity. Residues 100 to 120 (LLLGMPAPVAIILFALIAWQV) traverse the membrane as a helical segment. Residue S121 is a topological domain, periplasmic. Residues 122-142 (GVGMGIATLISLIAIGAIGAW) traverse the membrane as a helical segment. The Cytoplasmic segment spans residues 143–148 (SQAMIT). Residues 145-324 (AMITLALVLT…ILAIILDRLT (180 aa)) enclose the ABC transmembrane type-1 domain. A helical transmembrane segment spans residues 149–169 (LALVLTALLFCVVIGLPMGIW). Over 170-198 (LARSPRAAKIVRPLLDAMQTTPAFVYLVP) the chain is Periplasmic. Residues 199–219 (IVMLFGIGNVPGVVVTIIFAL) form a helical membrane-spanning segment. The Cytoplasmic segment spans residues 220 to 270 (PPIVRLTILGINQVPADLIEASRSFGASPRQMLFKVQLPLAMPTIMAGVNQ). A helical transmembrane segment spans residues 271 to 291 (TLMLALSMVVIASMIAVGGLG). At 292–300 (QMVLRGIGR) the chain is on the periplasmic side. Residues 301–321 (LDMGLATVGGVGIVILAIILD) form a helical membrane-spanning segment. The Cytoplasmic portion of the chain corresponds to 322–354 (RLTQAVGRDSRSRGNRRWYTTGPVGLITRPFVK).

This sequence belongs to the binding-protein-dependent transport system permease family. CysTW subfamily. The complex is composed of two ATP-binding proteins (ProV), two transmembrane proteins (ProW) and a solute-binding protein (ProX).

The protein localises to the cell inner membrane. Its function is as follows. Part of the ProU ABC transporter complex involved in glycine betaine and proline betaine uptake. Probably responsible for the translocation of the substrate across the membrane. The polypeptide is Glycine betaine/proline betaine transport system permease protein ProW (Salmonella typhimurium (strain LT2 / SGSC1412 / ATCC 700720)).